Consider the following 206-residue polypeptide: Ras-related protein Rab-7a (206 aa).

15-22 contacts GTP; that stretch reads GDSGVGKT. Residues Ser-17 and Ser-23 each carry the phosphoserine modification. 3 positions are modified to phosphothreonine: Thr-34, Thr-40, and Thr-64. GTP is bound by residues 34–40 and 63–67; these read TQQYRAT and DTAGQ. The short motif at 37-45 is the Effector region element; that stretch reads YRATVGADF. Ser-72 carries the phosphoserine modification. Tyr-78 and Tyr-88 each carry phosphotyrosine. GTP-binding positions include 125–128 and 157–158; these read NKLD and AK. Residues Cys-205 and Cys-206 are each lipidated (S-geranylgeranyl cysteine).

Belongs to the small GTPase superfamily. Rab family.

It localises to the cytoplasmic vesicle. The protein localises to the phagosome membrane. It is found in the late endosome membrane. The protein resides in the lysosome membrane. Its subcellular location is the autophagosome membrane. It localises to the lipid droplet. The enzyme catalyses GTP + H2O = GDP + phosphate + H(+). Its function is as follows. Small GTPase which cycles between active GTP-bound and inactive GDP-bound states. In its active state, binds to a variety of effector proteins playing a key role in the regulation of endo-lysosomal trafficking. Governs early-to-late endosomal maturation, microtubule minus-end as well as plus-end directed endosomal migration and positioning, and endosome-lysosome transport through different protein-protein interaction cascades. Involved in lipophagy, a cytosolic lipase-independent autophagic pathway. Plays a role in phagocyte formation and acidification. The sequence is that of Ras-related protein Rab-7a from Paramecium octaurelia.